A 120-amino-acid polypeptide reads, in one-letter code: Large ribosomal subunit protein bL19 (120 aa).

Belongs to the bacterial ribosomal protein bL19 family.

In terms of biological role, this protein is located at the 30S-50S ribosomal subunit interface and may play a role in the structure and function of the aminoacyl-tRNA binding site. The sequence is that of Large ribosomal subunit protein bL19 from Picosynechococcus sp. (strain ATCC 27264 / PCC 7002 / PR-6) (Agmenellum quadruplicatum).